The chain runs to 347 residues: NADH-ubiquinone oxidoreductase chain 2 (347 aa).

10 consecutive transmembrane segments (helical) span residues 3–23 (PPILIAILATVMTGTMIVMLS), 25–45 (HWLLIWIGFEMNMLAIIPILM), 66–86 (ASMLLMMGVTINLLYSGQWMI), 111–131 (FHFWVPEVTQGISLSSGMILL), 149–169 (INTDLMTLVALASVLVGGWGG), 178–198 (IMAYSSIAHMGWMAAIIIYNP), 201–221 (MFLNLSLYILMTLSTFMLFML), 237–257 (IPLIASTILTLMLSLGGLPPL), 274–294 (DMIVVPTLMAITALLNLYFYM), and 325–345 (LLPPLIITSTMLLPIMPMMSI).

Belongs to the complex I subunit 2 family. Core subunit of respiratory chain NADH dehydrogenase (Complex I) which is composed of 45 different subunits. Interacts with TMEM242.

Its subcellular location is the mitochondrion inner membrane. It catalyses the reaction a ubiquinone + NADH + 5 H(+)(in) = a ubiquinol + NAD(+) + 4 H(+)(out). In terms of biological role, core subunit of the mitochondrial membrane respiratory chain NADH dehydrogenase (Complex I) which catalyzes electron transfer from NADH through the respiratory chain, using ubiquinone as an electron acceptor. Essential for the catalytic activity and assembly of complex I. This chain is NADH-ubiquinone oxidoreductase chain 2, found in Vulpes vulpes (Red fox).